The sequence spans 307 residues: Quinolinate synthase (307 aa).

Residues His23 and Ser40 each coordinate iminosuccinate. Cys86 lines the [4Fe-4S] cluster pocket. Iminosuccinate-binding positions include 112 to 114 and Ser129; that span reads YVN. Cys173 is a binding site for [4Fe-4S] cluster. Iminosuccinate contacts are provided by residues 199–201 and Thr216; that span reads HPE. [4Fe-4S] cluster is bound at residue Cys265.

It belongs to the quinolinate synthase family. Type 2 subfamily. Requires [4Fe-4S] cluster as cofactor.

The protein resides in the cytoplasm. It catalyses the reaction iminosuccinate + dihydroxyacetone phosphate = quinolinate + phosphate + 2 H2O + H(+). It functions in the pathway cofactor biosynthesis; NAD(+) biosynthesis; quinolinate from iminoaspartate: step 1/1. Catalyzes the condensation of iminoaspartate with dihydroxyacetone phosphate to form quinolinate. The protein is Quinolinate synthase of Methanocaldococcus jannaschii (strain ATCC 43067 / DSM 2661 / JAL-1 / JCM 10045 / NBRC 100440) (Methanococcus jannaschii).